The primary structure comprises 1098 residues: uncharacterized protein (1098 aa).

This is an uncharacterized protein from Invertebrate iridescent virus 3 (IIV-3).